The following is a 616-amino-acid chain: Chaperone protein HscA (616 aa).

This sequence belongs to the heat shock protein 70 family.

Functionally, chaperone involved in the maturation of iron-sulfur cluster-containing proteins. Has a low intrinsic ATPase activity which is markedly stimulated by HscB. Involved in the maturation of IscU. This Shigella flexneri serotype 5b (strain 8401) protein is Chaperone protein HscA.